We begin with the raw amino-acid sequence, 121 residues long: Small ribosomal subunit protein uS13 (121 aa).

Residues 94–121 (GLPLRGQRTRTNARTRKGPRRAAQSLKK) form a disordered region.

The protein belongs to the universal ribosomal protein uS13 family. In terms of assembly, part of the 30S ribosomal subunit. Forms a loose heterodimer with protein S19. Forms two bridges to the 50S subunit in the 70S ribosome.

Functionally, located at the top of the head of the 30S subunit, it contacts several helices of the 16S rRNA. In the 70S ribosome it contacts the 23S rRNA (bridge B1a) and protein L5 of the 50S subunit (bridge B1b), connecting the 2 subunits; these bridges are implicated in subunit movement. Contacts the tRNAs in the A and P-sites. This chain is Small ribosomal subunit protein uS13, found in Paraburkholderia phymatum (strain DSM 17167 / CIP 108236 / LMG 21445 / STM815) (Burkholderia phymatum).